The primary structure comprises 156 residues: ATP synthase subunit b (156 aa).

A helical membrane pass occupies residues 7 to 26 (FIGQMVAFAIFIYLTYRYVW).

This sequence belongs to the ATPase B chain family. As to quaternary structure, F-type ATPases have 2 components, F(1) - the catalytic core - and F(0) - the membrane proton channel. F(1) has five subunits: alpha(3), beta(3), gamma(1), delta(1), epsilon(1). F(0) has three main subunits: a(1), b(2) and c(10-14). The alpha and beta chains form an alternating ring which encloses part of the gamma chain. F(1) is attached to F(0) by a central stalk formed by the gamma and epsilon chains, while a peripheral stalk is formed by the delta and b chains.

It is found in the cell inner membrane. Its function is as follows. F(1)F(0) ATP synthase produces ATP from ADP in the presence of a proton or sodium gradient. F-type ATPases consist of two structural domains, F(1) containing the extramembraneous catalytic core and F(0) containing the membrane proton channel, linked together by a central stalk and a peripheral stalk. During catalysis, ATP synthesis in the catalytic domain of F(1) is coupled via a rotary mechanism of the central stalk subunits to proton translocation. In terms of biological role, component of the F(0) channel, it forms part of the peripheral stalk, linking F(1) to F(0). This chain is ATP synthase subunit b, found in Cellvibrio japonicus (strain Ueda107) (Pseudomonas fluorescens subsp. cellulosa).